The following is a 797-amino-acid chain: MAP/microtubule affinity-regulating kinase 3 (797 aa).

The tract at residues 1 to 35 (MSTRTPLPTVNERDTENHISHGDGRQEVTSRTGRS) is disordered. The span at 11–28 (NERDTENHISHGDGRQEV) shows a compositional bias: basic and acidic residues. The residue at position 42 (Ser-42) is a Phosphoserine. Residues 56–307 (YRLLKTIGKG…LEQIMKDRWI (252 aa)) enclose the Protein kinase domain. ATP-binding positions include 62–70 (IGKGNFAKV) and Lys-85. The Proton acceptor role is filled by Asp-178. The residue at position 211 (Thr-211) is a Phosphothreonine; by LKB1. Positions 326–365 (ISDQKRIDIMVGMGYSQEEIQESLSKMKYDEITATYLLLG) constitute a UBA domain. Phosphoserine is present on residues Ser-368, Ser-374, Ser-376, Ser-380, Ser-383, Ser-400, Ser-419, and Ser-469. Disordered regions lie at residues 372–504 (DASD…GMTR) and 585–701 (PDQR…KPRS). Low complexity predominate over residues 374–385 (SDSSSSSNLSLA). Positions 391–400 (SDLSNSTGQS) are enriched in polar residues. Polar residues-rich tracts occupy residues 492-504 (VPSS…GMTR) and 585-602 (PDQR…SATT). Phosphoserine occurs at positions 593 and 596. Thr-602 bears the Phosphothreonine mark. Thr-617 is modified (phosphothreonine; by PKC/PRKCZ). 3 positions are modified to phosphoserine: Ser-636, Ser-651, and Ser-654. Residues 637-664 (PSLSHEATPLSQTRSRGSTNLFSKLTSK) are compositionally biased toward polar residues. Positions 669–678 (LPTEYERNGR) are enriched in basic and acidic residues. Residue Ser-687 is modified to Phosphoserine. The segment covering 689–699 (EQKDENREAKP) has biased composition (basic and acidic residues). Residues 748-797 (DGHAESLVQWEMEVCKLPRLSLNGVRFKRISGTSIAFKNIASKIANELKL) form the KA1 domain.

The protein belongs to the protein kinase superfamily. CAMK Ser/Thr protein kinase family. SNF1 subfamily. In terms of assembly, interacts with MAPT/TAU. Interacts with DLG5 (via coiled-coil domain). Interacts with STK3/MST2 and STK4/MST1 in the presence of DLG5. Interacts with YWHAB, YWHAG, YWHAQ and YWHAZ. Interacts with PKP2 (via N-terminus). Interacts with CDC25C. Interacts with KSR1. Post-translationally, phosphorylated at Thr-211 by STK11/LKB1 in complex with STE20-related adapter-alpha (STRADA) pseudo kinase and CAB39. Phosphorylation at Thr-617 by PRKCZ/aPKC inhibits the kinase activity.

The protein resides in the cell membrane. Its subcellular location is the cell projection. It is found in the dendrite. The protein localises to the cytoplasm. The catalysed reaction is L-seryl-[protein] + ATP = O-phospho-L-seryl-[protein] + ADP + H(+). The enzyme catalyses L-threonyl-[protein] + ATP = O-phospho-L-threonyl-[protein] + ADP + H(+). With respect to regulation, activated by phosphorylation on Thr-211. Inhibited by phosphorylation on Thr-617. Serine/threonine-protein kinase. Involved in the specific phosphorylation of microtubule-associated proteins for MAP2 and MAP4. Phosphorylates the microtubule-associated protein MAPT/TAU. Phosphorylates CDC25C on 'Ser-216'. Regulates localization and activity of some histone deacetylases by mediating phosphorylation of HDAC7, promoting subsequent interaction between HDAC7 and 14-3-3 and export from the nucleus. Regulates localization and activity of MITF by mediating its phosphorylation, promoting subsequent interaction between MITF and 14-3-3 and retention in the cytosol. Negatively regulates the Hippo signaling pathway and antagonizes the phosphorylation of LATS1. Cooperates with DLG5 to inhibit the kinase activity of STK3/MST2 toward LATS1. Phosphorylates PKP2 and KSR1. The sequence is that of MAP/microtubule affinity-regulating kinase 3 (Mark3) from Rattus norvegicus (Rat).